The chain runs to 685 residues: Serotransferrin (685 aa).

Positions 1 to 16 (MKPLLLLPLLGCLATI) are cleaved as a signal peptide. 2 consecutive Transferrin-like domains span residues 23-329 (VKWC…ALKI) and 340-666 (MKWC…SLRT). Cys26 and Cys48 are oxidised to a cystine. Residues Asp72 and Tyr102 each contribute to the Fe(3+) site. Cystine bridges form between Cys125–Cys206, Cys170–Cys184, and Cys234–Cys248. Positions 127, 131, 133, and 134 each coordinate hydrogencarbonate. Tyr200 contributes to the Fe(3+) binding site. His256 serves as a coordination point for Fe(3+). Cystine bridges form between Cys343–Cys379 and Cys353–Cys370. Residues Asp394 and Tyr428 each coordinate Fe(3+). Intrachain disulfides connect Cys404-Cys678, Cys419-Cys639, Cys451-Cys526, Cys475-Cys667, Cys485-Cys499, Cys496-Cys509, and Cys566-Cys580. The hydrogencarbonate site is built by Thr453, Arg457, Ala459, and Gly460. N-linked (GlcNAc...) asparagine glycosylation is present at Asn476. Tyr520 is a Fe(3+) binding site. His588 serves as a coordination point for Fe(3+).

The protein belongs to the transferrin family. In terms of assembly, monomer.

Its subcellular location is the secreted. Its function is as follows. Transferrins are iron binding transport proteins which can bind two Fe(3+) ions in association with the binding of an anion, usually bicarbonate. This chain is Serotransferrin (tf), found in Paralichthys olivaceus (Bastard halibut).